The chain runs to 276 residues: Large ribosomal subunit protein uL2 (276 aa).

Disordered stretches follow at residues 1–20 and 219–276; these read MGIK…TTND and TVRG…RRKK. Polar residues predominate over residues 7 to 20; the sequence is NPTTNGRRNMTTND.

It belongs to the universal ribosomal protein uL2 family. As to quaternary structure, part of the 50S ribosomal subunit. Forms a bridge to the 30S subunit in the 70S ribosome.

Its function is as follows. One of the primary rRNA binding proteins. Required for association of the 30S and 50S subunits to form the 70S ribosome, for tRNA binding and peptide bond formation. It has been suggested to have peptidyltransferase activity; this is somewhat controversial. Makes several contacts with the 16S rRNA in the 70S ribosome. This chain is Large ribosomal subunit protein uL2, found in Bacillus mycoides (strain KBAB4) (Bacillus weihenstephanensis).